The following is a 212-amino-acid chain: Small ribosomal subunit protein uS3 (212 aa).

One can recognise a KH type-2 domain in the interval 39 to 108 (IKNYIKERYK…EITISVVEVR (70 aa)).

This sequence belongs to the universal ribosomal protein uS3 family. In terms of assembly, part of the 30S ribosomal subunit. Forms a tight complex with proteins S10 and S14.

Binds the lower part of the 30S subunit head. Binds mRNA in the 70S ribosome, positioning it for translation. This is Small ribosomal subunit protein uS3 from Aquifex aeolicus (strain VF5).